The sequence spans 269 residues: Shikimate dehydrogenase (NADP(+)) (269 aa).

Shikimate contacts are provided by residues 17-19 (SKS) and Thr64. Lys68 (proton acceptor) is an active-site residue. Glu80 is an NADP(+) binding site. Residues Asn89 and Asp105 each contribute to the shikimate site. NADP(+) contacts are provided by residues 130 to 134 (GAGGA), 154 to 159 (NRTRAK), and Met213. A shikimate-binding site is contributed by Tyr215. Gly237 contacts NADP(+).

Belongs to the shikimate dehydrogenase family. As to quaternary structure, homodimer.

It carries out the reaction shikimate + NADP(+) = 3-dehydroshikimate + NADPH + H(+). The protein operates within metabolic intermediate biosynthesis; chorismate biosynthesis; chorismate from D-erythrose 4-phosphate and phosphoenolpyruvate: step 4/7. Involved in the biosynthesis of the chorismate, which leads to the biosynthesis of aromatic amino acids. Catalyzes the reversible NADPH linked reduction of 3-dehydroshikimate (DHSA) to yield shikimate (SA). The protein is Shikimate dehydrogenase (NADP(+)) of Neisseria meningitidis serogroup C / serotype 2a (strain ATCC 700532 / DSM 15464 / FAM18).